Here is a 185-residue protein sequence, read N- to C-terminus: Ribosome-recycling factor (185 aa).

It belongs to the RRF family.

The protein localises to the cytoplasm. Its function is as follows. Responsible for the release of ribosomes from messenger RNA at the termination of protein biosynthesis. May increase the efficiency of translation by recycling ribosomes from one round of translation to another. This chain is Ribosome-recycling factor, found in Bacillus cereus (strain ATCC 10987 / NRS 248).